Consider the following 532-residue polypeptide: Protein kinase domain-containing protein ppk9 (532 aa).

The Protein kinase domain maps to Trp23–Phe274. ATP-binding positions include Leu29–Val37 and Lys52. Asp145 serves as the catalytic Proton acceptor. Over residues Pro316 to Pro346 the composition is skewed to polar residues. The segment at Pro316 to Asp349 is disordered.

Its subcellular location is the cytoplasm. The protein localises to the nucleus. It localises to the cytoskeleton. The protein resides in the microtubule organizing center. It is found in the spindle pole body. This is Protein kinase domain-containing protein ppk9 (ppk9) from Schizosaccharomyces pombe (strain 972 / ATCC 24843) (Fission yeast).